The sequence spans 149 residues: Probable flagellum biosynthesis repressor protein FlbT (149 aa).

This sequence belongs to the FlbT family.

Has a post-transcriptional repressor function in flagellum biogenesis. Associates with the 5'-UTR of fljK mRNA and promotes its degradation. The protein is Probable flagellum biosynthesis repressor protein FlbT of Rhizobium johnstonii (strain DSM 114642 / LMG 32736 / 3841) (Rhizobium leguminosarum bv. viciae).